The primary structure comprises 334 residues: Heat-inducible transcription repressor HrcA (334 aa).

This sequence belongs to the HrcA family.

Negative regulator of class I heat shock genes (grpE-dnaK-dnaJ and groELS operons). Prevents heat-shock induction of these operons. This is Heat-inducible transcription repressor HrcA from Acidovorax sp. (strain JS42).